The sequence spans 121 residues: Large ribosomal subunit protein bL19 (121 aa).

This sequence belongs to the bacterial ribosomal protein bL19 family.

This protein is located at the 30S-50S ribosomal subunit interface and may play a role in the structure and function of the aminoacyl-tRNA binding site. The polypeptide is Large ribosomal subunit protein bL19 (Mesomycoplasma hyopneumoniae (strain 232) (Mycoplasma hyopneumoniae)).